Reading from the N-terminus, the 101-residue chain is Defensin-like protein 222 (101 aa).

Residues 1–21 (MRTIVLFSTLMILVLSCMSNA) form the signal peptide. Disulfide bonds link cysteine 68–cysteine 85, cysteine 71–cysteine 90, and cysteine 75–cysteine 92.

It belongs to the DEFL family.

Its subcellular location is the secreted. The chain is Defensin-like protein 222 from Arabidopsis thaliana (Mouse-ear cress).